Here is a 232-residue protein sequence, read N- to C-terminus: MVQSKEQRVHGVFEKIYKNYDQMNSVISFKQHKKWRDKTMQLMNVPKGATALDVCCGTGDWTIALADAAGETGEIKGLDFSKNMLSIAEQKTESYSQIELIHGNAMELPFPDNTFDYVTIGFGLRNVPDYLTVLKEMARVVKPGGQVVCLETSQPEMFGFKQLYFLYFRFIMPMFGKLFAKSFKEYSWLQESAREFPGMKELAALFEEAGLKNVQYHPFTGGVAATHVGWKR.

Residues threonine 58, aspartate 79, and 104-105 (NA) contribute to the S-adenosyl-L-methionine site.

It belongs to the class I-like SAM-binding methyltransferase superfamily. MenG/UbiE family.

It carries out the reaction a 2-demethylmenaquinol + S-adenosyl-L-methionine = a menaquinol + S-adenosyl-L-homocysteine + H(+). It participates in quinol/quinone metabolism; menaquinone biosynthesis; menaquinol from 1,4-dihydroxy-2-naphthoate: step 2/2. Its function is as follows. Methyltransferase required for the conversion of demethylmenaquinol (DMKH2) to menaquinol (MKH2). In Bacillus licheniformis (strain ATCC 14580 / DSM 13 / JCM 2505 / CCUG 7422 / NBRC 12200 / NCIMB 9375 / NCTC 10341 / NRRL NRS-1264 / Gibson 46), this protein is Demethylmenaquinone methyltransferase.